The sequence spans 541 residues: Nuclear receptor subfamily 5 group A member 2 (541 aa).

Positions 1 to 10 (MSSNSDTGDL) are enriched in polar residues. A disordered region spans residues 1-35 (MSSNSDTGDLQESLKHGLTPIGAGLPDRHGSPIPA). Residues 83 to 154 (EELCPVCGDK…KCLSVGMKLE (72 aa)) constitute a DNA-binding region (nuclear receptor). Cys86, Cys89, Cys103, Cys106, Cys122, Cys128, Cys138, and Cys141 together coordinate Zn(2+). NR C4-type zinc fingers lie at residues 86 to 106 (CPVC…CESC) and 122 to 146 (CIEN…FQKC). Residues 152 to 167 (KLEAVRADRMRGGRNK) are C-terminal extension (CTE). The FTZ-F1 box signature appears at 168–187 (FGPMYKRDRALKQQKKALIR). Residue Lys270 forms a Glycyl lysine isopeptide (Lys-Gly) (interchain with G-Cter in SUMO1) linkage. Residues 300 to 539 (SIPHLILELL…NLLIEMLHAK (240 aa)) enclose the NR LBD domain. Residues 421 to 424 (GATL), Tyr516, and Lys520 each bind a phospholipid derivative. The tract at residues 528-539 (YNNLLIEMLHAK) is AF-2.

Belongs to the nuclear hormone receptor family. NR5 subfamily. In terms of assembly, monomer; Binds DNA as a monomer. Interacts with nuclear receptor corepressors NR0B1 and NR0B2; repressing NR5A2 nuclear receptor activity. Interacts with nuclear receptor coactivators CTNNB1, PPARGC1A and NCOA2; interaction takes place following ligand-binding and promotes target gene activation. Interacts (when sumoylated) with GPS2; interaction with GPS2 onto hepatic acute phase protein promoters prevents N-Cor corepressor complex dissociation. Interacts with HNF1A. Interacts with GRIP1. In terms of processing, sumoylated by SUMO1 at Lys-270 during the hepatic acute phase response, leading to promote interaction with GPS2 and prevent N-Cor corepressor complex dissociation. Abundantly expressed in pancreas, less in liver, very low levels in heart and lung. Expressed in the Hep-G2 cell line. Isoform 1 and isoform 2 seem to be present in fetal and adult liver and Hep-G2 cells.

It is found in the nucleus. Its subcellular location is the chromosome. Activated by synthetic agonists RR-RJW100, SR-RJW100, endo sulfamide compound 6N and GSK8470. Functionally, orphan nuclear receptor that binds DNA as a monomer to the 5'-TCAAGGCCA-3' sequence and controls expression of target genes: regulates key biological processes, such as early embryonic development, cholesterol and bile acid synthesis pathways, as well as liver and pancreas morphogenesis. Ligand-binding causes conformational change which causes recruitment of coactivators, promoting target gene activation. The specific ligand is unknown, but specific phospholipids, such as phosphatidylethanolamine, phosphatidylserine, dilauroyl phosphatidylcholine and diundecanoyl phosphatidylcholine can act as ligand in vitro. Acts as a pioneer transcription factor, which unwraps target DNA from histones and elicits local opening of closed chromatin. Plays a central role during preimplantation stages of embryonic development. Plays a minor role in zygotic genome activation (ZGA) by regulating a small set of two-cell stage genes. Plays a major role in morula development (2-16 cells embryos) by acting as a master regulator at the 8-cell stage, controlling expression of lineage-specifying transcription factors and genes involved in mitosis, telomere maintenance and DNA repair. Zygotic NR5A2 binds to both closed and open chromatin with other transcription factors, often at SINE B1/Alu repeats DNA elements, promoting chromatin accessibility at nearby regulatory regions. Also involved in the epiblast stage of development and embryonic stem cell pluripotency, by promoting expression of POU5F1/OCT4. Regulates other processes later in development, such as formation of connective tissue in lower jaw and middle ear, neural stem cell differentiation, ovarian follicle development and Sertoli cell differentiation. Involved in exocrine pancreas development and acinar cell differentiation. Acts as an essential transcriptional regulator of lipid metabolism. Key regulator of cholesterol 7-alpha-hydroxylase gene (CYP7A) expression in liver. Also acts as a negative regulator of inflammation in different organs, such as, liver and pancreas. Protects against intestinal inflammation via its ability to regulate glucocorticoid production. Plays an anti-inflammatory role during the hepatic acute phase response by acting as a corepressor: inhibits the hepatic acute phase response by preventing dissociation of the N-Cor corepressor complex. Acts as a regulator of immunity by promoting lymphocyte T-cell development, proliferation and effector functions. Also involved in resolution of endoplasmic reticulum stress in the liver. In constrast to isoform 1 and isoform 2, does not induce cholesterol 7-alpha-hydroxylase gene (CYP7A) promoter activity. In terms of biological role, (Microbial infection) Plays a crucial role for hepatitis B virus gene transcription and DNA replication. Mechanistically, synergistically cooperates with HNF1A to up-regulate the activity of one of the critical cis-elements in the hepatitis B virus genome enhancer II (ENII). This Homo sapiens (Human) protein is Nuclear receptor subfamily 5 group A member 2.